Here is a 686-residue protein sequence, read N- to C-terminus: Protein MxiA (686 aa).

The next 6 helical transmembrane spans lie at 28 to 52 (LIIP…ILVF), 105 to 129 (FVIG…FIVI), 197 to 216 (AIAG…SVGM), 232 to 256 (ILTI…GFIV), 274 to 292 (IFGN…LAIG), and 299 to 315 (FFVF…LFYY).

Belongs to the FHIPEP (flagella/HR/invasion proteins export pore) family.

Its subcellular location is the cell inner membrane. Necessary for the secretion of IPA invasins. The protein is Protein MxiA (mxiA) of Shigella flexneri.